The chain runs to 357 residues: Cobalt-precorrin-5B C(1)-methyltransferase (357 aa).

The protein belongs to the CbiD family.

It catalyses the reaction Co-precorrin-5B + S-adenosyl-L-methionine = Co-precorrin-6A + S-adenosyl-L-homocysteine. Its pathway is cofactor biosynthesis; adenosylcobalamin biosynthesis; cob(II)yrinate a,c-diamide from sirohydrochlorin (anaerobic route): step 6/10. Its function is as follows. Catalyzes the methylation of C-1 in cobalt-precorrin-5B to form cobalt-precorrin-6A. The protein is Cobalt-precorrin-5B C(1)-methyltransferase of Gloeobacter violaceus (strain ATCC 29082 / PCC 7421).